The primary structure comprises 1992 residues: Otoferlin (1992 aa).

3 C2 domains span residues 1–98 (MALV…EVSD), 241–362 (KRSK…HKWA), and 405–536 (IEGN…FLPT). Residues 1 to 1958 (MALVVHLKTV…IRYFIWHNYR (1958 aa)) are Cytoplasmic-facing. The tract at residues 655–699 (PALAKKKKEGGGESEEEESELIHNSSEEEAEDDGDLTSVPSTPPM) is disordered. 2 consecutive C2 domains span residues 952-1077 (IQAV…PPRF) and 1124-1250 (RGPI…NNWA). Residues D984, D990, D1046, and D1048 each coordinate Ca(2+). Positions 1282–1363 (VKVDLNEDEK…ESAEIKADDF (82 aa)) form a coiled coil. Disordered stretches follow at residues 1288-1311 (EDEK…EEEP) and 1354-1399 (ESAE…KPKV). The segment covering 1356-1399 (AEIKADDFPMKGTKPKEKSKDKKSTKDKKKNNDGTEKRPPKPKV) has biased composition (basic and acidic residues). C2 domains lie at 1470-1588 (DPNM…ATCG) and 1711-1860 (PAPG…KQCS). Positions 1503, 1509, 1558, 1560, 1566, 1831, 1834, and 1837 each coordinate Ca(2+). A helical transmembrane segment spans residues 1959–1979 (WLILKALALLLLLLLVGLFLY). Residues 1980 to 1992 (SIPGYLVKKLLGA) lie on the Extracellular side of the membrane.

The protein belongs to the ferlin family. The cofactor is Ca(2+).

Its subcellular location is the cytoplasmic vesicle. The protein resides in the secretory vesicle. It is found in the synaptic vesicle membrane. The protein localises to the basolateral cell membrane. It localises to the endoplasmic reticulum membrane. Its subcellular location is the golgi apparatus membrane. The protein resides in the presynaptic cell membrane. It is found in the cell membrane. Its function is as follows. Key calcium ion sensor involved in the Ca(2+)-triggered synaptic vesicle-plasma membrane fusion and in the control of neurotransmitter release at these output synapses. In Danio rerio (Zebrafish), this protein is Otoferlin (otof).